The chain runs to 435 residues: GTPase Der (435 aa).

2 consecutive EngA-type G domains span residues 2 to 167 and 178 to 351; these read ATVV…RESG and PKIA…ESYC. GTP contacts are provided by residues 8 to 15, 55 to 59, 118 to 121, 184 to 191, 231 to 235, and 297 to 300; these read GRANVGKS, DTCGV, NKSE, GKPNVGKS, DTAGM, and NKFD. The KH-like domain maps to 352 to 435; that stretch reads RKVPQQLLSK…PLVIEFKSRR (84 aa).

This sequence belongs to the TRAFAC class TrmE-Era-EngA-EngB-Septin-like GTPase superfamily. EngA (Der) GTPase family. In terms of assembly, associates with the 50S ribosomal subunit.

Functionally, GTPase that plays an essential role in the late steps of ribosome biogenesis. The polypeptide is GTPase Der (Pseudothermotoga lettingae (strain ATCC BAA-301 / DSM 14385 / NBRC 107922 / TMO) (Thermotoga lettingae)).